A 395-amino-acid chain; its full sequence is Probable FMNH2-dependent monooxygenase SfnC (395 aa).

In terms of biological role, involved in the dimethyl sulfide degradation pathway. The polypeptide is Probable FMNH2-dependent monooxygenase SfnC (Pseudomonas putida (Arthrobacter siderocapsulatus)).